The sequence spans 444 residues: UDP-N-acetylmuramate--L-alanine ligase (444 aa).

110–116 (GAHGKTS) is an ATP binding site.

This sequence belongs to the MurCDEF family.

Its subcellular location is the cytoplasm. It carries out the reaction UDP-N-acetyl-alpha-D-muramate + L-alanine + ATP = UDP-N-acetyl-alpha-D-muramoyl-L-alanine + ADP + phosphate + H(+). It functions in the pathway cell wall biogenesis; peptidoglycan biosynthesis. Functionally, cell wall formation. In Streptococcus sanguinis (strain SK36), this protein is UDP-N-acetylmuramate--L-alanine ligase.